Consider the following 211-residue polypeptide: Ribosome maturation factor RimM (211 aa).

One can recognise a PRC barrel domain in the interval 111-182; the sequence is PDAWYDHQLV…TLVVTPPLGL (72 aa). The interval 184–211 is disordered; the sequence is EEIPDETPTAEPTPAEAAEPAPEGDDAR. Residues 189–204 show a composition bias toward low complexity; sequence ETPTAEPTPAEAAEPA.

It belongs to the RimM family. In terms of assembly, binds ribosomal protein uS19.

It is found in the cytoplasm. Functionally, an accessory protein needed during the final step in the assembly of 30S ribosomal subunit, possibly for assembly of the head region. Essential for efficient processing of 16S rRNA. May be needed both before and after RbfA during the maturation of 16S rRNA. It has affinity for free ribosomal 30S subunits but not for 70S ribosomes. The sequence is that of Ribosome maturation factor RimM from Clavibacter michiganensis subsp. michiganensis (strain NCPPB 382).